A 299-amino-acid chain; its full sequence is tRNA dimethylallyltransferase (299 aa).

10–17 (GPTAVGKT) contributes to the ATP binding site. A substrate-binding site is contributed by 12–17 (TAVGKT). Residues 35–38 (DSQQ) are interaction with substrate tRNA.

Belongs to the IPP transferase family. In terms of assembly, monomer. Mg(2+) serves as cofactor.

It catalyses the reaction adenosine(37) in tRNA + dimethylallyl diphosphate = N(6)-dimethylallyladenosine(37) in tRNA + diphosphate. In terms of biological role, catalyzes the transfer of a dimethylallyl group onto the adenine at position 37 in tRNAs that read codons beginning with uridine, leading to the formation of N6-(dimethylallyl)adenosine (i(6)A). This Streptococcus thermophilus (strain ATCC BAA-491 / LMD-9) protein is tRNA dimethylallyltransferase.